The chain runs to 303 residues: Mycothiol acetyltransferase (303 aa).

N-acetyltransferase domains follow at residues 6–134 (TSLA…VEGD) and 154–303 (NEAY…QSSS). E37 contributes to the 1D-myo-inositol 2-(L-cysteinylamino)-2-deoxy-alpha-D-glucopyranoside binding site. Acetyl-CoA-binding positions include 75–77 (VVV) and 83–88 (RQGYGS). Residues E180, K221, and E233 each coordinate 1D-myo-inositol 2-(L-cysteinylamino)-2-deoxy-alpha-D-glucopyranoside. Residues 237 to 239 (VGL) and 244 to 250 (RRRGLGD) each bind acetyl-CoA. Y271 lines the 1D-myo-inositol 2-(L-cysteinylamino)-2-deoxy-alpha-D-glucopyranoside pocket. 276–281 (NESARR) is a binding site for acetyl-CoA.

Belongs to the acetyltransferase family. MshD subfamily. In terms of assembly, monomer.

It catalyses the reaction 1D-myo-inositol 2-(L-cysteinylamino)-2-deoxy-alpha-D-glucopyranoside + acetyl-CoA = mycothiol + CoA + H(+). Functionally, catalyzes the transfer of acetyl from acetyl-CoA to desacetylmycothiol (Cys-GlcN-Ins) to form mycothiol. This is Mycothiol acetyltransferase from Corynebacterium diphtheriae (strain ATCC 700971 / NCTC 13129 / Biotype gravis).